The primary structure comprises 183 residues: Apo-citrate lyase phosphoribosyl-dephospho-CoA transferase (183 aa).

This sequence belongs to the CitX family.

The catalysed reaction is apo-[citrate lyase ACP] + 2'-(5''-triphospho-alpha-D-ribosyl)-3'-dephospho-CoA = holo-[citrate lyase ACP] + diphosphate. Functionally, transfers 2-(5''-triphosphoribosyl)-3'-dephosphocoenzyme-A on a serine residue to the apo-acyl carrier protein (gamma chain) of the citrate lyase to yield holo-acyl carrier protein. The sequence is that of Apo-citrate lyase phosphoribosyl-dephospho-CoA transferase from Escherichia coli O139:H28 (strain E24377A / ETEC).